The primary structure comprises 309 residues: Ribosomal RNA large subunit methyltransferase F (309 aa).

A disordered region spans residues 1-21 (MASQHDKKSVQSGLLHPRNPH).

The protein belongs to the methyltransferase superfamily. METTL16/RlmF family.

The protein resides in the cytoplasm. It catalyses the reaction adenosine(1618) in 23S rRNA + S-adenosyl-L-methionine = N(6)-methyladenosine(1618) in 23S rRNA + S-adenosyl-L-homocysteine + H(+). In terms of biological role, specifically methylates the adenine in position 1618 of 23S rRNA. The protein is Ribosomal RNA large subunit methyltransferase F of Desulfotalea psychrophila (strain LSv54 / DSM 12343).